The following is a 387-amino-acid chain: Diels-Alderase ORF3 (387 aa).

This sequence belongs to the Diels-Alderase family.

It functions in the pathway secondary metabolite biosynthesis. Its function is as follows. Diels-Alderase; part of the gene cluster that mediates the biosynthesis of a tyrosine-derived cytochalasan acting as a fungal signal recognized by resistant rice plants and leads to avirulence in Pi33 resistant rice cultivars. The first step in the pathway is catalyzed by the hybrid PKS-NRPS ACE1, assisted by the enoyl reductase RAP1, that are responsible for fusion of the tyrosine precursor and the polyketide backbone. The polyketide synthase module (PKS) of ACE1 is responsible for the synthesis of the polyketide backbone and the downstream nonribosomal peptide synthetase (NRPS) amidates the carboxyl end of the polyketide with the tyrosine precursor. Because ACE1 lacks a designated enoylreductase (ER) domain, the required activity is provided the enoyl reductase RAP1. Reduction by the hydrolyase ORFZ, followed by dehydration and intra-molecular Diels-Alder cyclization by the Diels-Alderase ORF3 then yield the required isoindolone-fused macrocycle. A number of oxidative steps catalyzed by the tailoring enzymes identified within the cluster, including cytochrome P450 monooxygenases CYP1 to CYP4, the FAD-linked oxidoreductase OXR2 and the short-chain dehydrogenase/reductase OXR1, are further required to afford the final cytochalasans that confer avirulence and which have still to be identified. The monooxygenase CYP1 has been shown to be a site-selective C-18 hydroxylase whereas the function of CYP3 is the site-selective epoxidation of the C-6/C-7 olefin that is present in some intermediate compounds. Finally, SYN2 and RAP2 are not required for avirulence in Pi33 resistant rice cultivars. This is Diels-Alderase ORF3 from Pyricularia oryzae (strain 70-15 / ATCC MYA-4617 / FGSC 8958) (Rice blast fungus).